Here is a 223-residue protein sequence, read N- to C-terminus: DNA replication complex GINS protein SLD5 (223 aa).

Met-1 carries the N-acetylmethionine modification. At Thr-2 the chain carries N-acetylthreonine; in DNA replication complex GINS protein SLD5, N-terminally processed. Phosphoserine is present on residues Ser-12 and Ser-16. Positions 166–223 are important for GINS complex assembly; that stretch reads DLDSYVFLRVKERQENILVEPEADEQRDYVIDLEVGSQHLIRYKTIAPLVASGAVQLI.

Belongs to the GINS4/SLD5 family. As to quaternary structure, component of the CMG helicase complex, a hexameric ring of related MCM2-7 subunits stabilized by CDC45 and the tetrameric GINS complex. Associated with ORC2. Interacts with HELB. Highly abundant in testis. Weakly expressed in thymus and bone marrow.

The protein resides in the nucleus. It localises to the chromosome. It is found in the cytoplasm. Functionally, required for initiation of chromosomal DNA replication. Core component of CDC45-MCM-GINS (CMG) helicase, the molecular machine that unwinds template DNA during replication, and around which the replisome is built. The chain is DNA replication complex GINS protein SLD5 (Gins4) from Mus musculus (Mouse).